The sequence spans 358 residues: Aminomethyltransferase (358 aa).

It belongs to the GcvT family. In terms of assembly, the glycine cleavage system is composed of four proteins: P, T, L and H.

The catalysed reaction is N(6)-[(R)-S(8)-aminomethyldihydrolipoyl]-L-lysyl-[protein] + (6S)-5,6,7,8-tetrahydrofolate = N(6)-[(R)-dihydrolipoyl]-L-lysyl-[protein] + (6R)-5,10-methylene-5,6,7,8-tetrahydrofolate + NH4(+). In terms of biological role, the glycine cleavage system catalyzes the degradation of glycine. The chain is Aminomethyltransferase from Francisella tularensis subsp. tularensis (strain WY96-3418).